The following is a 158-amino-acid chain: Transcription elongation factor GreA (158 aa).

It belongs to the GreA/GreB family.

In terms of biological role, necessary for efficient RNA polymerase transcription elongation past template-encoded arresting sites. The arresting sites in DNA have the property of trapping a certain fraction of elongating RNA polymerases that pass through, resulting in locked ternary complexes. Cleavage of the nascent transcript by cleavage factors such as GreA or GreB allows the resumption of elongation from the new 3'terminus. GreA releases sequences of 2 to 3 nucleotides. In Macrococcus caseolyticus (strain JCSC5402) (Macrococcoides caseolyticum), this protein is Transcription elongation factor GreA.